Here is a 1038-residue protein sequence, read N- to C-terminus: Inner tegument protein (1038 aa).

The interaction with large tegument protein stretch occupies residues 545–1038 (WGITPPVDVG…VPGNTSGSDP (494 aa)).

It belongs to the herpesviridae inner tegument protein family. As to quaternary structure, interacts (via C-terminus) with the large tegument protein/LTP (via N-terminus).

It is found in the virion tegument. It localises to the host cytoplasm. The protein resides in the host nucleus. Its subcellular location is the host Golgi apparatus. The protein localises to the host trans-Golgi network. Functionally, plays an essential role in cytoplasmic secondary envelopment during viral egress. Interacts with the capsid via the large tegument protein/LTP and participates in its transport to the host trans-Golgi network (TGN) where secondary envelopment occurs. Modulates tegumentation and capsid accumulation at the viral assembly complex. This is Inner tegument protein (21) from Homo sapiens (Human).